The chain runs to 452 residues: Enolase (452 aa).

A (2R)-2-phosphoglycerate-binding site is contributed by glutamine 167. The active-site Proton donor is the glutamate 209. Residues aspartate 250, glutamate 310, and aspartate 337 each coordinate Mg(2+). Lysine 362, arginine 391, serine 392, and lysine 413 together coordinate (2R)-2-phosphoglycerate. Residue lysine 362 is the Proton acceptor of the active site.

The protein belongs to the enolase family. Mg(2+) is required as a cofactor.

Its subcellular location is the cytoplasm. The protein resides in the secreted. The protein localises to the cell surface. It catalyses the reaction (2R)-2-phosphoglycerate = phosphoenolpyruvate + H2O. It functions in the pathway carbohydrate degradation; glycolysis; pyruvate from D-glyceraldehyde 3-phosphate: step 4/5. Catalyzes the reversible conversion of 2-phosphoglycerate (2-PG) into phosphoenolpyruvate (PEP). It is essential for the degradation of carbohydrates via glycolysis. This Mycoplasmopsis synoviae (strain 53) (Mycoplasma synoviae) protein is Enolase.